The following is a 396-amino-acid chain: L-lactate dehydrogenase (396 aa).

The 380-residue stretch at 1 to 380 folds into the FMN hydroxy acid dehydrogenase domain; that stretch reads MIISAASDYR…SGDSLVQELG (380 aa). Tyrosine 24 lines the substrate pocket. FMN contacts are provided by serine 106 and glutamine 127. Tyrosine 129 is a substrate binding site. An FMN-binding site is contributed by threonine 155. Arginine 164 is a binding site for substrate. Lysine 251 lines the FMN pocket. Histidine 275 (proton acceptor) is an active-site residue. A substrate-binding site is contributed by arginine 278. 306-330 is an FMN binding site; it reads DSGIRNGLDVVRMIALGADTVLLGR.

It belongs to the FMN-dependent alpha-hydroxy acid dehydrogenase family. The cofactor is FMN.

Its subcellular location is the cell inner membrane. It carries out the reaction (S)-lactate + A = pyruvate + AH2. Its function is as follows. Catalyzes the conversion of L-lactate to pyruvate. Is coupled to the respiratory chain. The protein is L-lactate dehydrogenase of Salmonella paratyphi C (strain RKS4594).